The chain runs to 231 residues: Two-component response regulator ARR3 (231 aa).

One can recognise a Response regulatory domain in the interval 34 to 161 (HVLAVDDSLV…DVKRLRSYLT (128 aa)). Aspartate 94 is modified (4-aspartylphosphate). Residues 170–231 (GNKRKLTTPP…DSPMRSPGLA (62 aa)) form a disordered region. Over residues 185–199 (SATSSMESSDSTVES) the composition is skewed to low complexity. Residues 210–221 (LTMSPESATSLV) show a composition bias toward polar residues.

It belongs to the ARR family. Type-A subfamily. Two-component system major event consists of a His-to-Asp phosphorelay between a sensor histidine kinase (HK) and a response regulator (RR). In plants, the His-to-Asp phosphorelay involves an additional intermediate named Histidine-containing phosphotransfer protein (HPt). This multistep phosphorelay consists of a His-Asp-His-Asp sequential transfer of a phosphate group between first a His and an Asp of the HK protein, followed by the transfer to a conserved His of the HPt protein and finally the transfer to an Asp in the receiver domain of the RR protein. As to expression, predominantly expressed in roots.

The protein resides in the nucleus. Functionally, functions as a response regulator involved in His-to-Asp phosphorelay signal transduction system. Phosphorylation of the Asp residue in the receiver domain activates the ability of the protein to promote the transcription of target genes. Type-A response regulators seem to act as negative regulators of the cytokinin signaling. This chain is Two-component response regulator ARR3 (ARR3), found in Arabidopsis thaliana (Mouse-ear cress).